The chain runs to 367 residues: Mitogen-activated protein kinase 12 (367 aa).

One can recognise a Protein kinase domain in the interval 27–311; the sequence is YQDLQPVGSG…AAEALTHPYF (285 aa). ATP contacts are provided by residues 33 to 41 and Lys56; that span reads VGSGAYGAV. Asp153 (proton acceptor) is an active-site residue. Position 183 is a phosphothreonine (Thr183). A TXY motif is present at residues 183 to 185; that stretch reads TGY. At Tyr185 the chain carries Phosphotyrosine.

Belongs to the protein kinase superfamily. CMGC Ser/Thr protein kinase family. MAP kinase subfamily. As to quaternary structure, monomer. Interacts with the PDZ domain of the syntrophin SNTA1. Interacts with SH3BP5, LIN7C, SCRIB and SYNJ2BP. Interacts with PTPN4; this interaction induces the activation of PTPN4 phosphatase activity. The cofactor is Mg(2+). Post-translationally, dually phosphorylated on Thr-183 and Tyr-185 by MAP2K3/MKK3 and MAP2K6/MKK6, which activates the enzyme. Ubiquitinated. Ubiquitination leads to degradation by the proteasome pathway. As to expression, highly expressed in skeletal muscle. Also expressed in the heart, particularly in cardiac myocytes, lung, thymus and testes.

Its subcellular location is the cytoplasm. It is found in the nucleus. It localises to the mitochondrion. The catalysed reaction is L-seryl-[protein] + ATP = O-phospho-L-seryl-[protein] + ADP + H(+). The enzyme catalyses L-threonyl-[protein] + ATP = O-phospho-L-threonyl-[protein] + ADP + H(+). Activated by phosphorylation on threonine and tyrosine. MAP2K3/MKK3 and MAP2K6/MKK6 are both essential for the activation of MAPK12 induced by environmental stress, whereas MAP2K6/MKK6 is the major MAPK12 activator in response to TNF-alpha. Serine/threonine kinase which acts as an essential component of the MAP kinase signal transduction pathway. MAPK12 is one of the four p38 MAPKs which play an important role in the cascades of cellular responses evoked by extracellular stimuli such as pro-inflammatory cytokines or physical stress leading to direct activation of transcription factors such as ELK1 and ATF2. Accordingly, p38 MAPKs phosphorylate a broad range of proteins and it has been estimated that they may have approximately 200 to 300 substrates each. Some of the targets are downstream kinases such as MAPKAPK2, which are activated through phosphorylation and further phosphorylate additional targets. Plays a role in myoblast differentiation and also in the down-regulation of cyclin D1 in response to hypoxia in adrenal cells suggesting MAPK12 may inhibit cell proliferation while promoting differentiation. Phosphorylates DLG1. Following osmotic shock, MAPK12 in the cell nucleus increases its association with nuclear DLG1, thereby causing dissociation of DLG1-SFPQ complexes. This function is independent of its catalytic activity and could affect mRNA processing and/or gene transcription to aid cell adaptation to osmolarity changes in the environment. Regulates UV-induced checkpoint signaling and repair of UV-induced DNA damage and G2 arrest after gamma-radiation exposure. MAPK12 is involved in the regulation of SLC2A1 expression and basal glucose uptake in L6 myotubes; and negatively regulates SLC2A4 expression and contraction-mediated glucose uptake in adult skeletal muscle. C-Jun (JUN) phosphorylation is stimulated by MAPK14 and inhibited by MAPK12, leading to a distinct AP-1 regulation. MAPK12 is required for the normal kinetochore localization of PLK1, prevents chromosomal instability and supports mitotic cell viability. MAPK12-signaling is also positively regulating the expansion of transient amplifying myogenic precursor cells during muscle growth and regeneration. The sequence is that of Mitogen-activated protein kinase 12 (Mapk12) from Mus musculus (Mouse).